We begin with the raw amino-acid sequence, 194 residues long: Molybdenum cofactor guanylyltransferase (194 aa).

GTP contacts are provided by residues 12–14 (LAG), Lys25, Asn53, Asp70, and Asp100. Mg(2+) is bound at residue Asp100.

This sequence belongs to the MobA family. Monomer. Mg(2+) serves as cofactor.

The protein resides in the cytoplasm. It carries out the reaction Mo-molybdopterin + GTP + H(+) = Mo-molybdopterin guanine dinucleotide + diphosphate. Functionally, transfers a GMP moiety from GTP to Mo-molybdopterin (Mo-MPT) cofactor (Moco or molybdenum cofactor) to form Mo-molybdopterin guanine dinucleotide (Mo-MGD) cofactor. The polypeptide is Molybdenum cofactor guanylyltransferase (Aliivibrio salmonicida (strain LFI1238) (Vibrio salmonicida (strain LFI1238))).